A 525-amino-acid polypeptide reads, in one-letter code: Chromosomal replication initiator protein DnaA (525 aa).

Positions 1–71 are domain I, interacts with DnaA modulators; sequence MNDFWQHCSA…SDLAREFWNT (71 aa). Positions 71-188 are domain II; that stretch reads TPIEVQFVLD…GEADSMYERS (118 aa). The segment at 162–182 is disordered; the sequence is AGRRTWRPGPGAAPANGGEAD. Residues 169-181 show a composition bias toward low complexity; it reads PGPGAAPANGGEA. The interval 189-405 is domain III, AAA+ region; the sequence is KLNPVLTFDN…GALRKILAYS (217 aa). ATP is bound by residues G233, G235, K236, and T237. Positions 406–525 are domain IV, binds dsDNA; sequence KFHGREISIE…LHVLEQTLKG (120 aa).

The protein belongs to the DnaA family. In terms of assembly, oligomerizes as a right-handed, spiral filament on DNA at oriC.

Its subcellular location is the cytoplasm. In terms of biological role, plays an essential role in the initiation and regulation of chromosomal replication. ATP-DnaA binds to the origin of replication (oriC) to initiate formation of the DNA replication initiation complex once per cell cycle. Binds the DnaA box (a 9 base pair repeat at the origin) and separates the double-stranded (ds)DNA. Forms a right-handed helical filament on oriC DNA; dsDNA binds to the exterior of the filament while single-stranded (ss)DNA is stabiized in the filament's interior. The ATP-DnaA-oriC complex binds and stabilizes one strand of the AT-rich DNA unwinding element (DUE), permitting loading of DNA polymerase. After initiation quickly degrades to an ADP-DnaA complex that is not apt for DNA replication. Binds acidic phospholipids. The sequence is that of Chromosomal replication initiator protein DnaA from Burkholderia cenocepacia (strain HI2424).